A 307-amino-acid chain; its full sequence is N-acetylmuramic acid 6-phosphate etherase (307 aa).

The SIS domain maps to 57–220 (IIEAFKTNGR…TTASMIGVGK (164 aa)). Glutamate 85 (proton donor) is an active-site residue. Residue glutamate 116 is part of the active site.

The protein belongs to the GCKR-like family. MurNAc-6-P etherase subfamily. As to quaternary structure, homodimer.

It carries out the reaction N-acetyl-D-muramate 6-phosphate + H2O = N-acetyl-D-glucosamine 6-phosphate + (R)-lactate. The protein operates within amino-sugar metabolism; N-acetylmuramate degradation. Its function is as follows. Specifically catalyzes the cleavage of the D-lactyl ether substituent of MurNAc 6-phosphate, producing GlcNAc 6-phosphate and D-lactate. This is N-acetylmuramic acid 6-phosphate etherase from Alkaliphilus metalliredigens (strain QYMF).